A 414-amino-acid chain; its full sequence is Serine/threonine transporter SstT (414 aa).

Over 2 to 15 the chain is Cytoplasmic; the sequence is TTQRSPGLFRRLAH. Residues 16–36 traverse the membrane as a helical segment; the sequence is GSLVKQILVGLVLGILLAWIS. Residues 37 to 45 are Periplasmic-facing; the sequence is KPAAEAVGL. Residues 46-66 form a helical membrane-spanning segment; sequence LGTLFVGALKAVAPILVLMLV. Residues 67–83 are Cytoplasmic-facing; that stretch reads MASIANHQHGQKTNILP. A helical membrane pass occupies residues 84–104; it reads ILFLYLLGTFSAALAAVVFSF. At 105 to 142 the chain is on the periplasmic side; sequence AFPSTLHLSSSAGDISPPSGIVEVMRGLVMSMVSNPID. Residues 143-163 traverse the membrane as a helical segment; that stretch reads ALLKGNYIGILVWAIGLGFAL. Residues 164 to 179 lie on the Cytoplasmic side of the membrane; the sequence is RHGNETTKNLVNDMSN. Residues 180–200 form a helical membrane-spanning segment; the sequence is AVTFMVKLVIRFAPIGIFGLV. Over 201 to 217 the chain is Periplasmic; sequence SSTLATTGFSTLWGYAQ. Residues 218–238 traverse the membrane as a helical segment; that stretch reads LLVVLVGCMLLVALVVNPLLV. Residues 239 to 299 lie on the Cytoplasmic side of the membrane; sequence WWKIRRNPFP…VSIPLGATIN (61 aa). Residues 300–320 form a helical membrane-spanning segment; it reads MAGAAITITVLTLAAVNTLGI. At 321 to 331 the chain is on the periplasmic side; sequence PVDLPTALLLS. The helical transmembrane segment at 332–352 threads the bilayer; sequence VVASLCACGASGVAGGSLLLI. The Cytoplasmic portion of the chain corresponds to 353–414; the sequence is PLACNMFGIS…DRLANSALRN (62 aa).

This sequence belongs to the dicarboxylate/amino acid:cation symporter (DAACS) (TC 2.A.23) family.

It is found in the cell inner membrane. It catalyses the reaction L-serine(in) + Na(+)(in) = L-serine(out) + Na(+)(out). The enzyme catalyses L-threonine(in) + Na(+)(in) = L-threonine(out) + Na(+)(out). Involved in the import of serine and threonine into the cell, with the concomitant import of sodium (symport system). This Shigella dysenteriae serotype 1 (strain Sd197) protein is Serine/threonine transporter SstT.